Consider the following 572-residue polypeptide: MLRLTCFTPSFSRACCPLFAMMLKVPSVHLHHPRFSPFRFYHTSLLVKGTRDRRLILVERSRHLCTLPLAAAKQSAASPSENLSRKAKKKAIQQSPEALLKQKLDMCSKKGDVLEALRLYDEARRNGVQLSQYHYNVLLYVCSLAEAATESSPNPGLSRGFDIFKQMIVDKVVPNEATFTNGARLAVAKDDPEMAFDMVKQMKAFGIQPRLRSYGPALFGFCRKGDADKAYEVDAHMVESEVVPEEPELAALLKVSMDTKNADKVYKTLQRLRDLVRQVSKSTFDMIEEWFKSEVATKTGVKKWDVKKIRDAVVSGGGGWHGQGWLGTGKWNVKRTEMDENGVCKCCKEKLVCIDINPVETETFAASLTRLACEREVKANFNQFQEWLERHGPFDAVIDGANMGLVNQRSFSFFQLNNTVQRCQQISPSKRLPLVILHKSRVNGGPATYPKNRALLEKWKNAGALYATPPGSNDDWYWLYAAVSCKCLLVTNDEMRDHLFQLLGNSFFPRWKEKHQVRISVTREDGLKLNMPPPYSIVIQESEDGTWHVPMSVEDDLQTSRQWLCAKRSKTP.

The transit peptide at 1–70 (MLRLTCFTPS…SRHLCTLPLA (70 aa)) directs the protein to the chloroplast and mitochondrion. PPR repeat units follow at residues 96–130 (PEAL…GVQL), 136–174 (NVLL…KVVP), 175–209 (NEAT…GIQP), and 210–244 (RLRS…EVVP). One can recognise a PRORP domain in the interval 338 to 565 (MDENGVCKCC…DLQTSRQWLC (228 aa)). Residues C344 and C347 each coordinate Zn(2+). Mn(2+) is bound by residues D399, D474, D475, and D493. Zn(2+)-binding residues include H548 and C565.

The protein belongs to the PPR family. P subfamily. Mg(2+) is required as a cofactor. Requires Mn(2+) as cofactor.

The protein localises to the mitochondrion. It localises to the plastid. It is found in the chloroplast. It catalyses the reaction Endonucleolytic cleavage of RNA, removing 5'-extranucleotides from tRNA precursor.. Functionally, endonuclease RNase P responsible for the 5' maturation of tRNA precursors. Preferentially cleaves at the unusual cleavage site, but also able to cleave at the classical cleavage site. Also involved in the maturation of mRNAs in mitochondria. The polypeptide is Proteinaceous RNase P 1, chloroplastic/mitochondrial (PRORP1) (Arabidopsis thaliana (Mouse-ear cress)).